A 148-amino-acid chain; its full sequence is Arginine repressor (148 aa).

Belongs to the ArgR family.

The protein localises to the cytoplasm. It participates in amino-acid biosynthesis; L-arginine biosynthesis [regulation]. In terms of biological role, regulates arginine biosynthesis genes. The sequence is that of Arginine repressor from Chloroherpeton thalassium (strain ATCC 35110 / GB-78).